A 527-amino-acid polypeptide reads, in one-letter code: Glucose-6-phosphate isomerase (527 aa).

Glutamate 323 functions as the Proton donor in the catalytic mechanism. Catalysis depends on residues histidine 352 and lysine 454.

It belongs to the GPI family.

Its subcellular location is the cytoplasm. It catalyses the reaction alpha-D-glucose 6-phosphate = beta-D-fructose 6-phosphate. It participates in carbohydrate biosynthesis; gluconeogenesis. Its pathway is carbohydrate degradation; glycolysis; D-glyceraldehyde 3-phosphate and glycerone phosphate from D-glucose: step 2/4. Functionally, catalyzes the reversible isomerization of glucose-6-phosphate to fructose-6-phosphate. The chain is Glucose-6-phosphate isomerase from Prochlorococcus marinus (strain MIT 9301).